Consider the following 620-residue polypeptide: Sorbicillinoid biosynthetic cluster transcription factor 1 (620 aa).

Positions 10–37 (CEECRRRKARCDRVRPQCGICADAGRTC) form a DNA-binding region, zn(2)-C6 fungal-type. Positions 285–308 (HDDETSPNENSGSCPSVSPSTTQN) are disordered. The span at 291-308 (PNENSGSCPSVSPSTTQN) shows a compositional bias: polar residues.

The protein resides in the nucleus. In terms of biological role, transcription factor that acts as the main regulator of the gene cluster that mediates the biosynthesis of sorbicillinoids, a diverse group of yellow secondary metabolites that restrict growth of competing pathogenic fungi but not of bacteria. The sequence is that of Sorbicillinoid biosynthetic cluster transcription factor 1 from Penicillium rubens (strain ATCC 28089 / DSM 1075 / NRRL 1951 / Wisconsin 54-1255) (Penicillium chrysogenum).